Consider the following 1249-residue polypeptide: Pleckstrin homology-like domain family B member 2 (1249 aa).

Disordered regions lie at residues 64–85 (QPVSAKRSPSPMGTSVRSSPSL) and 128–154 (DHYTGRDSERSTRLSEKPPYSRYSSRN). Residues Ser-71 and Ser-73 each carry the phosphoserine modification. Residues 74 to 84 (PMGTSVRSSPS) are compositionally biased toward polar residues. The segment covering 128 to 143 (DHYTGRDSERSTRLSE) has biased composition (basic and acidic residues). Ser-156, Ser-203, Ser-241, and Ser-244 each carry phosphoserine. Disordered stretches follow at residues 190–248 (SPIS…LSNM) and 264–289 (NQMSPLSLPPRSSLGNSRRGQLGEKD). The span at 231 to 248 (ENVSVRTRKYSGSSLSNM) shows a compositional bias: polar residues. The span at 267–283 (SPLSLPPRSSLGNSRRG) shows a compositional bias: low complexity. Ser-329, Ser-333, Ser-347, Ser-380, Ser-383, Ser-389, Ser-411, Ser-416, Ser-465, Ser-486, and Ser-510 each carry phosphoserine. The disordered stretch occupies residues 388 to 424 (DSDLESLRQSSETPQPVLRERKSSISSISGRDDLMDY). A phosphothreonine mark is found at Thr-546 and Thr-570. Coiled-coil stretches lie at residues 580–692 (TQEL…LDNC) and 718–803 (FEDL…LCNL). Positions 866–934 (VSQPQSSEHF…LGQSNSCGSV (69 aa)) are disordered. The segment covering 873 to 888 (EHFRSLEERKKQHKEG) has biased composition (basic and acidic residues). Thr-894 is modified (phosphothreonine). Over residues 901–919 (TPSLSPHFSSATMGRSTTP) the composition is skewed to polar residues. Positions 1028–1094 (IARIEEMERL…QKLIEKEVKI (67 aa)) form a coiled coil. In terms of domain architecture, PH spans 1139–1242 (EKTCRGYLIK…WMDVIVTGAE (104 aa)).

In terms of assembly, interacts with FLNC. Interacts with AMOTL2; interaction may facilitate PHLDB2 localization to the myotube podosome cortex that surrounds the core. Part of a cortical microtubule stabilization complex (CMSC) composed of KANK1, PPFIA1, PPFIBP1, ERC1/ELKS, PHLDB2/LL5beta, CLASPs, KIF21A and possibly additional interactors; within CMSCs KANK1 and PHLDB2/LL5beta appear to be the core components for targeting of microtubule-binding proteins KIF21A and CLASPs, whereas PPFIA1, PPFIBP1 and ERC1/ELKS serve as scaffolds for protein clustering. In terms of tissue distribution, expressed at postsynaptic membranes of skeletal neuromuscular junctions (at protein level).

Its subcellular location is the cytoplasm. The protein localises to the membrane. It is found in the cell projection. The protein resides in the podosome. It localises to the cell cortex. Functionally, seems to be involved in the assembly of the postsynaptic apparatus. May play a role in acetyl-choline receptor (AChR) aggregation in the postsynaptic membrane. This chain is Pleckstrin homology-like domain family B member 2 (Phldb2), found in Mus musculus (Mouse).